Consider the following 328-residue polypeptide: DNA-directed RNA polymerase subunit alpha (328 aa).

An alpha N-terminal domain (alpha-NTD) region spans residues 1–234 (MQGSVTEFLK…EQLDAFVDLR (234 aa)). Positions 248–328 (FXPILLRPVD…NWPPASIAED (81 aa)) are alpha C-terminal domain (alpha-CTD).

The protein belongs to the RNA polymerase alpha chain family. As to quaternary structure, homodimer. The RNAP catalytic core consists of 2 alpha, 1 beta, 1 beta' and 1 omega subunit. When a sigma factor is associated with the core the holoenzyme is formed, which can initiate transcription.

It carries out the reaction RNA(n) + a ribonucleoside 5'-triphosphate = RNA(n+1) + diphosphate. DNA-dependent RNA polymerase catalyzes the transcription of DNA into RNA using the four ribonucleoside triphosphates as substrates. In Haemophilus influenzae (strain ATCC 51907 / DSM 11121 / KW20 / Rd), this protein is DNA-directed RNA polymerase subunit alpha.